Reading from the N-terminus, the 81-residue chain is ATP synthase subunit c (81 aa).

2 helical membrane passes run 7–27 (AASVLAAALAVGLAAIGPGIG) and 57–77 (LAFMEALTIYGLVVALVLLFA).

Belongs to the ATPase C chain family. In terms of assembly, F-type ATPases have 2 components, F(1) - the catalytic core - and F(0) - the membrane proton channel. F(1) has five subunits: alpha(3), beta(3), gamma(1), delta(1), epsilon(1). F(0) has four main subunits: a(1), b(1), b'(1) and c(10-14). The alpha and beta chains form an alternating ring which encloses part of the gamma chain. F(1) is attached to F(0) by a central stalk formed by the gamma and epsilon chains, while a peripheral stalk is formed by the delta, b and b' chains.

The protein localises to the cellular thylakoid membrane. Functionally, f(1)F(0) ATP synthase produces ATP from ADP in the presence of a proton or sodium gradient. F-type ATPases consist of two structural domains, F(1) containing the extramembraneous catalytic core and F(0) containing the membrane proton channel, linked together by a central stalk and a peripheral stalk. During catalysis, ATP synthesis in the catalytic domain of F(1) is coupled via a rotary mechanism of the central stalk subunits to proton translocation. Key component of the F(0) channel; it plays a direct role in translocation across the membrane. A homomeric c-ring of between 10-14 subunits forms the central stalk rotor element with the F(1) delta and epsilon subunits. This is ATP synthase subunit c from Nostoc sp. (strain PCC 7120 / SAG 25.82 / UTEX 2576).